The chain runs to 158 residues: Protein Smg homolog (158 aa).

It belongs to the Smg family.

This chain is Protein Smg homolog, found in Shewanella sp. (strain ANA-3).